Consider the following 278-residue polypeptide: NAD kinase (278 aa).

The active-site Proton acceptor is aspartate 67. Residues 67 to 68 (DG), arginine 72, 137 to 138 (NE), lysine 148, arginine 165, aspartate 167, 178 to 183 (TGYALS), and glutamine 237 each bind NAD(+).

Belongs to the NAD kinase family. It depends on a divalent metal cation as a cofactor.

The protein resides in the cytoplasm. It catalyses the reaction NAD(+) + ATP = ADP + NADP(+) + H(+). Its function is as follows. Involved in the regulation of the intracellular balance of NAD and NADP, and is a key enzyme in the biosynthesis of NADP. Catalyzes specifically the phosphorylation on 2'-hydroxyl of the adenosine moiety of NAD to yield NADP. The sequence is that of NAD kinase from Thermococcus gammatolerans (strain DSM 15229 / JCM 11827 / EJ3).